The following is a 238-amino-acid chain: 2-C-methyl-D-erythritol 4-phosphate cytidylyltransferase (238 aa).

This sequence belongs to the IspD/TarI cytidylyltransferase family. IspD subfamily.

The enzyme catalyses 2-C-methyl-D-erythritol 4-phosphate + CTP + H(+) = 4-CDP-2-C-methyl-D-erythritol + diphosphate. Its pathway is isoprenoid biosynthesis; isopentenyl diphosphate biosynthesis via DXP pathway; isopentenyl diphosphate from 1-deoxy-D-xylulose 5-phosphate: step 2/6. Functionally, catalyzes the formation of 4-diphosphocytidyl-2-C-methyl-D-erythritol from CTP and 2-C-methyl-D-erythritol 4-phosphate (MEP). The sequence is that of 2-C-methyl-D-erythritol 4-phosphate cytidylyltransferase from Acinetobacter baumannii (strain ACICU).